The following is a 104-amino-acid chain: L-rhamnose mutarotase (104 aa).

A substrate-binding site is contributed by tyrosine 18. The Proton donor role is filled by histidine 22. Substrate is bound by residues tyrosine 41 and 76-77 (WW).

The protein belongs to the rhamnose mutarotase family. Homodimer.

The protein resides in the cytoplasm. It carries out the reaction alpha-L-rhamnose = beta-L-rhamnose. The protein operates within carbohydrate metabolism; L-rhamnose metabolism. In terms of biological role, involved in the anomeric conversion of L-rhamnose. The sequence is that of L-rhamnose mutarotase from Enterobacter sp. (strain 638).